The chain runs to 70 residues: Sec-independent protein translocase protein TatA (70 aa).

Residues 1–21 form a helical membrane-spanning segment; sequence MFGLGGQELILILLIILLLFG. Residues 50-62 are compositionally biased toward basic and acidic residues; it reads FNKVVDEPPRKTP. Residues 50–70 are disordered; it reads FNKVVDEPPRKTPENSTGSKS.

This sequence belongs to the TatA/E family. Forms a complex with TatC.

The protein resides in the cell inner membrane. Part of the twin-arginine translocation (Tat) system that transports large folded proteins containing a characteristic twin-arginine motif in their signal peptide across membranes. TatA could form the protein-conducting channel of the Tat system. This Chlorobium limicola (strain DSM 245 / NBRC 103803 / 6330) protein is Sec-independent protein translocase protein TatA.